The sequence spans 159 residues: Ribosomal RNA large subunit methyltransferase H (159 aa).

S-adenosyl-L-methionine contacts are provided by residues L76, G107, and 126 to 131 (ISSLTL).

Belongs to the RNA methyltransferase RlmH family. Homodimer.

Its subcellular location is the cytoplasm. It carries out the reaction pseudouridine(1915) in 23S rRNA + S-adenosyl-L-methionine = N(3)-methylpseudouridine(1915) in 23S rRNA + S-adenosyl-L-homocysteine + H(+). In terms of biological role, specifically methylates the pseudouridine at position 1915 (m3Psi1915) in 23S rRNA. In Cupriavidus metallidurans (strain ATCC 43123 / DSM 2839 / NBRC 102507 / CH34) (Ralstonia metallidurans), this protein is Ribosomal RNA large subunit methyltransferase H.